The following is a 196-amino-acid chain: DnaA initiator-associating protein DiaA (196 aa).

The SIS domain occupies 34–196 (LVQSLLNGNK…DNTLFPHQAD (163 aa)).

The protein belongs to the SIS family. DiaA subfamily. Homotetramer; dimer of dimers.

Required for the timely initiation of chromosomal replication via direct interactions with the DnaA initiator protein. In Edwardsiella ictaluri (strain 93-146), this protein is DnaA initiator-associating protein DiaA.